Here is a 439-residue protein sequence, read N- to C-terminus: Mitochondrial distribution and morphology protein 12 (439 aa).

Residues 1-439 (MSIDVNWRSA…VYPSFWTFLI (439 aa)) enclose the SMP-LTD domain. Residues 70–85 (YEEDDDDHTSDASEEL) show a composition bias toward acidic residues. Disordered regions lie at residues 70–102 (YEEDDDDHTSDASEELGSEHSSQWNRTHPELNE), 184–274 (SGWS…PPRM), and 353–386 (GSEQQQQQESAGDDHRPQSRPDSSASASQKRHGG). Positions 197–212 (GRSERHAGMKHQRAEP) are enriched in basic and acidic residues. A compositionally biased stretch (polar residues) spans 215–230 (DTSNSTSRPSTANTLP). Residues 231–240 (SHPSSSSKNS) show a composition bias toward low complexity. The segment covering 247–261 (RNDHPSLHAGEHIED) has biased composition (basic and acidic residues).

This sequence belongs to the MDM12 family. Component of the ER-mitochondria encounter structure (ERMES) or MDM complex, composed of mmm1, mdm10, mdm12 and mdm34. A mmm1 homodimer associates with one molecule of mdm12 on each side in a pairwise head-to-tail manner, and the SMP-LTD domains of mmm1 and mdm12 generate a continuous hydrophobic tunnel for phospholipid trafficking.

The protein resides in the mitochondrion outer membrane. Its subcellular location is the endoplasmic reticulum membrane. Component of the ERMES/MDM complex, which serves as a molecular tether to connect the endoplasmic reticulum (ER) and mitochondria. Components of this complex are involved in the control of mitochondrial shape and protein biogenesis, and function in nonvesicular lipid trafficking between the ER and mitochondria. Mdm12 is required for the interaction of the ER-resident membrane protein mmm1 and the outer mitochondrial membrane-resident beta-barrel protein mdm10. The mdm12-mmm1 subcomplex functions in the major beta-barrel assembly pathway that is responsible for biogenesis of all mitochondrial outer membrane beta-barrel proteins, and acts in a late step after the SAM complex. The mdm10-mdm12-mmm1 subcomplex further acts in the TOM40-specific pathway after the action of the mdm12-mmm1 complex. Essential for establishing and maintaining the structure of mitochondria and maintenance of mtDNA nucleoids. This chain is Mitochondrial distribution and morphology protein 12, found in Neosartorya fischeri (strain ATCC 1020 / DSM 3700 / CBS 544.65 / FGSC A1164 / JCM 1740 / NRRL 181 / WB 181) (Aspergillus fischerianus).